The chain runs to 240 residues: Aquaporin Z (240 aa).

Helical transmembrane passes span 10 to 30 (AIGTFWLTFAGCGSAVIAAGF) and 35 to 55 (IGLVGVSLAFGLSVVTMAYAI). The NPA 1 motif lies at 64–66 (NPA). 3 helical membrane passes run 82–102 (ILPYVIAQVCGAIVAAELLYI), 131–151 (MMACFLTEVVMTMMFLFIIMG), and 160–180 (GFAPLAIGLALVMIHLVSIPV). The NPA 2 motif lies at 186-188 (NPA). Residues 194–214 (ALFVGGWAMAQLWLFWVAPLI) form a helical membrane-spanning segment.

The protein belongs to the MIP/aquaporin (TC 1.A.8) family. Homotetramer.

It is found in the cell inner membrane. The catalysed reaction is H2O(in) = H2O(out). In terms of biological role, channel that permits osmotically driven movement of water in both directions. It is involved in the osmoregulation and in the maintenance of cell turgor during volume expansion in rapidly growing cells. It mediates rapid entry or exit of water in response to abrupt changes in osmolarity. The chain is Aquaporin Z from Bradyrhizobium diazoefficiens (strain JCM 10833 / BCRC 13528 / IAM 13628 / NBRC 14792 / USDA 110).